We begin with the raw amino-acid sequence, 372 residues long: 3-galactosyl-N-acetylglucosaminide 4-alpha-L-fucosyltransferase FUT3 (372 aa).

Over 1 to 15 the chain is Cytoplasmic; that stretch reads MDPLGAAKTQWPWRR. A helical; Signal-anchor for type II membrane protein membrane pass occupies residues 16–34; sequence CLAALLFQLLVAVCFFSYL. At 35 to 372 the chain is on the lumenal side; the sequence is RVSRDDATGS…MVRSIAAWFT (338 aa). The segment at 40–68 is disordered; that stretch reads DATGSPRPGLMAVEPVTGAPGGSSRQDTT. Asn165 and Asn196 each carry an N-linked (GlcNAc...) asparagine glycan.

Belongs to the glycosyltransferase 10 family. Post-translationally, glycosylated.

It is found in the golgi apparatus. Its subcellular location is the golgi stack membrane. The enzyme catalyses a beta-D-galactosyl-(1-&gt;3)-N-acetyl-beta-D-glucosaminyl derivative + GDP-beta-L-fucose = a beta-D-galactosyl-(1-&gt;3)-[alpha-L-fucosyl-(1-&gt;4)]-N-acetyl-beta-D-glucosaminyl derivative + GDP + H(+). It catalyses the reaction an N-acetyl-alpha-neuraminyl-(2-&gt;3)-beta-D-galactosyl-(1-&gt;4)-N-acetyl-beta-D-glucosaminyl derivative + GDP-beta-L-fucose = an alpha-Neu5Ac-(2-&gt;3)-beta-D-Gal-(1-&gt;4)-[alpha-L-Fuc-(1-&gt;3)]-beta-D-GlcNAc derivative + GDP + H(+). It carries out the reaction a beta-D-galactosyl-(1-&gt;4)-N-acetyl-beta-D-glucosaminyl derivative + GDP-beta-L-fucose = a beta-D-galactosyl-(1-&gt;4)-[alpha-L-fucosyl-(1-&gt;3)]-N-acetyl-beta-D-glucosaminyl derivative + GDP + H(+). The catalysed reaction is an alpha-Neu5Ac-(2-&gt;3)-beta-D-Gal-(1-&gt;4)-beta-D-GlcNAc-(1-&gt;3)-beta-D-Gal-(1-&gt;4)-[alpha-L-Fuc-(1-&gt;3)]-beta-D-GlcNAc derivative + GDP-beta-L-fucose = an alpha-Neu5Ac-(2-&gt;3)-beta-D-Gal-(1-&gt;4)-[alpha-L-Fuc-(1-&gt;3)]-beta-D-GlcNAc-(1-&gt;3)-beta-D-Gal-(1-&gt;4)-[alpha-L-Fuc-(1-&gt;3)]-beta-D-GlcNAc derivative + GDP + H(+). The enzyme catalyses Lc4Cer + GDP-beta-L-fucose = a lactoside III(4)-a-Fuc-Lc4Cer + GDP + H(+). It catalyses the reaction a beta-D-Gal-(1-&gt;3)-beta-D-GlcNAc-(1-&gt;3)-beta-D-Gal-(1-&gt;4)-beta-D-Glc-(1&lt;-&gt;1')-Cer(d18:1(4E)) + GDP-beta-L-fucose = a III(4)-a-Fuc-Lc4Cer(d18:1(4E)) + GDP + H(+). It carries out the reaction N-acetyl-alpha-neuraminosyl-(2-&gt;3)-beta-D-galactosyl-(1-&gt;3)-[N-acetyl-alpha-neuraminosyl-(2-&gt;6)]-N-acetyl-beta-D-glucosaminyl-(1-&gt;3)-beta-D-galactosyl-(1-&gt;4)-beta-D-glucosyl-(1&lt;-&gt;1')-N-acyl-sphing-4-enine + GDP-beta-L-fucose = N-acetyl-alpha-neuraminosyl-(2-&gt;3)-beta-D-galactosyl-(1-&gt;3)-alpha-L-fucosyl-(1-&gt;4)-[N-acetyl-alpha-neuraminosyl-(2-&gt;6)-N-acetyl-beta-D-glucosaminyl-(1-&gt;3)]-beta-D-galactosyl-(1-&gt;4)-beta-D-glucosyl-(1&lt;-&gt;1')-N-acyl-sphing-4-enine + GDP + H(+). The catalysed reaction is N-acetyl-alpha-neuraminosyl-(2-&gt;3)-beta-D-galactosyl-(1-&gt;3)-N-acetyl-beta-D-glucosaminyl-(1-&gt;3)-beta-D-galactosyl-(1-&gt;4)-beta-D-glucosyl-(1&lt;-&gt;1')-N-acyl-sphing-4-enine + GDP-beta-L-fucose = N-acetyl-alpha-neuraminosyl-(2-&gt;3)-beta-D-galactosyl-(1-&gt;3)-alpha-L-fucosyl-(1-&gt;4)-[N-acetyl-beta-D-glucosaminyl-(1-&gt;3)]-beta-D-galactosyl-(1-&gt;4)-beta-D-glucosyl-(1&lt;-&gt;1')-N-acyl-sphing-4-enine + GDP + H(+). The enzyme catalyses beta-D-galactosyl-(1-&gt;3)-N-acetyl-D-glucosamine + GDP-beta-L-fucose = beta-D-galactosyl-(1-&gt;3)-[alpha-L-fucosyl-(1-&gt;4)]-N-acetyl-D-glucosamine + GDP + H(+). It catalyses the reaction alpha-L-Fuc-(1-&gt;2)-beta-D-Gal-(1-&gt;3)-D-GlcNAc + GDP-beta-L-fucose = alpha-L-Fuc-(1-&gt;2)-beta-D-Gal-(1-&gt;3)-[alpha-L-Fuc-(1-&gt;4)]-D-GlcNAc + GDP + H(+). It carries out the reaction alpha-L-Fuc-(1-&gt;2)-beta-D-Gal-(1-&gt;4)-D-GlcNAc + GDP-beta-L-fucose = alpha-L-Fuc-(1-&gt;2)-beta-D-Gal-(1-&gt;4)-[alpha-L-Fuc-(1-&gt;3)]-D-GlcNAc + GDP + H(+). The catalysed reaction is beta-D-galactosyl-(1-&gt;4)-N-acetyl-D-glucosamine + GDP-beta-L-fucose = beta-D-galactosyl-(1-&gt;4)-[alpha-L-fucosyl-(1-&gt;3)]-N-acetyl-D-glucosamine + GDP + H(+). The enzyme catalyses lactose + GDP-beta-L-fucose = beta-D-galactosyl-(1-&gt;4)-[alpha-L-fucosyl-(1-&gt;3)]-D-glucose + GDP + H(+). It catalyses the reaction an alpha-Neu5Ac-(2-&gt;3)-beta-D-Gal-(1-&gt;3)-D-GlcNAc derivative + GDP-beta-L-fucose = an alpha-Neu5Ac-(2-&gt;3)-beta-D-Gal-(1-&gt;3)-[alpha-L-Fuc-(1-&gt;4)]-beta-D-GlcNAc derivative + GDP + H(+). It functions in the pathway protein modification; protein glycosylation. Catalyzes the transfer of L-fucose, from a guanosine diphosphate-beta-L-fucose, to both the subterminal N-acetyl glucosamine (GlcNAc) of type 1 chain (beta-D-Gal-(1-&gt;3)-beta-D-GlcNAc) glycolipids and oligosaccharides via an alpha(1,4) linkage, and the subterminal glucose (Glc) or GlcNAc of type 2 chain (beta-D-Gal-(1-&gt;4)-beta-D-GlcNAc) oligosaccharides via an alpha(1,3) linkage, independently of the presence of terminal alpha-L-fucosyl-(1,2) moieties on the terminal galactose of these acceptors and participates in the blood groups Lewis determination and expression of Lewis a (Le(a)), lewis b (Le(b)), Lewis x/SSEA-1 (Le(x)) and lewis y (Le(y)) antigens. Also catalyzes the transfer of L-fucose to subterminal GlcNAc of sialyl- and disialyl-lactotetraosylceramide to produce sialyl Lewis a (sLe(a)) and disialyl Lewis a via an alpha(1,4) linkage and therefore may regulate cell surface sialyl Lewis a expression and consequently regulates adhesive properties to E-selectin, cell proliferation and migration. Catalyzes the transfer of an L-fucose to 3'-sialyl-N-acetyllactosamine by an alpha(1,3) linkage, which allows the formation of sialyl-Lewis x structure and therefore may regulate the sialyl-Lewis x surface antigen expression and consequently adhesive properties to E-selectin. Prefers type 1 chain over type 2 acceptors. Type 1 tetrasaccharide is a better acceptor than type 1 disaccharide suggesting that a beta anomeric configuration of GlcNAc in the substrate is preferred. Lewis-positive (Le(+)) individuals have an active enzyme while Lewis-negative (Le(-)) individuals have an inactive enzyme. This Pongo pygmaeus (Bornean orangutan) protein is 3-galactosyl-N-acetylglucosaminide 4-alpha-L-fucosyltransferase FUT3.